The primary structure comprises 816 residues: MLSQGEILRNPSRTRLQRPPKSRSERKGWWYRVTIFLTCLIPNFMLRCFGMTTPEVQHAWREKVALCICIFFCWIILGFTTYGMNTIICKGSNQYVASRLKRDAFDGNTVIANGGIYYTDDEYAFGENHTYAFEKKSGACKLAFGRQLPSGDEDIDDLERINDIYWDWGDIMSKGMIVVGNKVYDPSYCTEPLFEEFNRKYAGTEGKPDFDTDEWRCYEDMFYAGKVATKTPGCLLADTMFWITTISIFGLIITKFLLGFFYSWYAKRRPKPSPKITPCILLVTCYSEGKDGIKNTLDSLCKQDYGYDYKLIVVICDGNITGSGNSMSTPDIVLGLSDVDRRAEPKGYISLTHGTKRYNRAKVHAGYYHVREEKKSRRYRCWPCFGRQADSSEVENYKTRILVINKCGNPSETFKAGNRGKRDSQVILMSFFSKLIYGDRMTELDFEIYQKMKFLMPHIEPEDFECILMVDADTIVKPDALSIMVNVFETDQKVIGMCGETMILNKFESWVTMIQVFEYYISHHLSKAFESVFGGVTCLPGCFCMYRIKIVTNQQGQLLSGPSKSRASVPRFSSMKSILSSSLEKSLCLPILANPAIINAYSVLEVKTLHQKNLLHLGEDRYLTTLLLKTFYRRKLVFIPAAKCETYVPGEFSVLLSQRRRWINSTIHNLFELVQVNNLCGAFCFSMQLVVVMELFGTLVLPAAIIFTFVMIAVSILIEPAWVPLIMLVGIFGLPAVLILITTMEIQYVFWCLVYILSIPIWNFVLPTYAFWHFDNFSWGDTRKVDGEGKEDEEGEFDHTKIRIRELEEFLSEANK.

Positions 1–21 are disordered; it reads MLSQGEILRNPSRTRLQRPPK. Residues 1–32 are Cytoplasmic-facing; that stretch reads MLSQGEILRNPSRTRLQRPPKSRSERKGWWYR. A helical transmembrane segment spans residues 33-53; it reads VTIFLTCLIPNFMLRCFGMTT. At 54–63 the chain is on the extracellular side; that stretch reads PEVQHAWREK. A helical transmembrane segment spans residues 64–84; the sequence is VALCICIFFCWIILGFTTYGM. At 85–240 the chain is on the cytoplasmic side; that stretch reads NTIICKGSNQ…TPGCLLADTM (156 aa). A helical transmembrane segment spans residues 241 to 261; that stretch reads FWITTISIFGLIITKFLLGFF. Topologically, residues 262–697 are extracellular; it reads YSWYAKRRPK…QLVVVMELFG (436 aa). Residues Asn319 and Asn664 are each glycosylated (N-linked (GlcNAc...) asparagine). A helical transmembrane segment spans residues 698–718; sequence TLVLPAAIIFTFVMIAVSILI. The Cytoplasmic segment spans residues 719 to 720; the sequence is EP. The helical transmembrane segment at 721–741 threads the bilayer; sequence AWVPLIMLVGIFGLPAVLILI. At 742 to 745 the chain is on the extracellular side; that stretch reads TTME. A helical transmembrane segment spans residues 746-766; that stretch reads IQYVFWCLVYILSIPIWNFVL. Residues 767-816 are Cytoplasmic-facing; sequence PTYAFWHFDNFSWGDTRKVDGEGKEDEEGEFDHTKIRIRELEEFLSEANK.

It belongs to the chitin synthase family. Class IV subfamily.

Its subcellular location is the cell membrane. It catalyses the reaction [(1-&gt;4)-N-acetyl-beta-D-glucosaminyl](n) + UDP-N-acetyl-alpha-D-glucosamine = [(1-&gt;4)-N-acetyl-beta-D-glucosaminyl](n+1) + UDP + H(+). Its function is as follows. Polymerizes chitin, a structural polymer of the cell wall and septum, by transferring the sugar moiety of UDP-GlcNAc to the non-reducing end of the growing chitin polymer. This chain is Chitin synthase 1 (CHS1), found in Encephalitozoon cuniculi (strain GB-M1) (Microsporidian parasite).